Reading from the N-terminus, the 210-residue chain is Urease accessory protein UreF (210 aa).

Belongs to the UreF family. UreD, UreF and UreG form a complex that acts as a GTP-hydrolysis-dependent molecular chaperone, activating the urease apoprotein by helping to assemble the nickel containing metallocenter of UreC. The UreE protein probably delivers the nickel.

It localises to the cytoplasm. Required for maturation of urease via the functional incorporation of the urease nickel metallocenter. This Cereibacter sphaeroides (strain ATCC 17025 / ATH 2.4.3) (Rhodobacter sphaeroides) protein is Urease accessory protein UreF.